Consider the following 266-residue polypeptide: Putative pyruvate, phosphate dikinase regulatory protein (266 aa).

ADP is bound at residue 149–156 (GVSRTSKT).

This sequence belongs to the pyruvate, phosphate/water dikinase regulatory protein family. PDRP subfamily.

It carries out the reaction N(tele)-phospho-L-histidyl/L-threonyl-[pyruvate, phosphate dikinase] + ADP = N(tele)-phospho-L-histidyl/O-phospho-L-threonyl-[pyruvate, phosphate dikinase] + AMP + H(+). It catalyses the reaction N(tele)-phospho-L-histidyl/O-phospho-L-threonyl-[pyruvate, phosphate dikinase] + phosphate + H(+) = N(tele)-phospho-L-histidyl/L-threonyl-[pyruvate, phosphate dikinase] + diphosphate. Bifunctional serine/threonine kinase and phosphorylase involved in the regulation of the pyruvate, phosphate dikinase (PPDK) by catalyzing its phosphorylation/dephosphorylation. The sequence is that of Putative pyruvate, phosphate dikinase regulatory protein from Geobacillus sp. (strain WCH70).